We begin with the raw amino-acid sequence, 97 residues long: Putative membrane protein insertion efficiency factor (97 aa).

Belongs to the UPF0161 family.

It is found in the cell membrane. Could be involved in insertion of integral membrane proteins into the membrane. This Lactobacillus gasseri (strain ATCC 33323 / DSM 20243 / BCRC 14619 / CIP 102991 / JCM 1131 / KCTC 3163 / NCIMB 11718 / NCTC 13722 / AM63) protein is Putative membrane protein insertion efficiency factor.